A 325-amino-acid chain; its full sequence is Heat-inducible transcription repressor HrcA (325 aa).

Belongs to the HrcA family.

Negative regulator of class I heat shock genes (grpE-dnaK-dnaJ and groELS operons). Prevents heat-shock induction of these operons. This is Heat-inducible transcription repressor HrcA from Staphylococcus haemolyticus (strain JCSC1435).